The primary structure comprises 646 residues: Anoctamin-10 (646 aa).

Helical transmembrane passes span 210–230, 241–261, 314–334, 357–377, 404–424, 502–522, 557–577, and 592–612; these read LYFG…LIGI, DKYV…LEVW, IYLV…YVMM, VLLF…NLLY, VLVF…FVMQ, FLLF…AVLV, LAFE…IALS, and ILTV…LAFV.

Belongs to the anoctamin family.

It is found in the membrane. Does not exhibit calcium-activated chloride channel (CaCC) activity. Can inhibit the activity of ANO1. This is Anoctamin-10 (ano10) from Danio rerio (Zebrafish).